A 441-amino-acid chain; its full sequence is Probable D-serine dehydratase (441 aa).

Lys117 is modified (N6-(pyridoxal phosphate)lysine).

The protein belongs to the serine/threonine dehydratase family. DsdA subfamily. Requires pyridoxal 5'-phosphate as cofactor.

The enzyme catalyses D-serine = pyruvate + NH4(+). The sequence is that of Probable D-serine dehydratase from Acinetobacter baylyi (strain ATCC 33305 / BD413 / ADP1).